A 383-amino-acid chain; its full sequence is Putative gustatory receptor 22c (383 aa).

The Cytoplasmic portion of the chain corresponds to 1-11 (MFASRSDLQSR). A helical membrane pass occupies residues 12 to 32 (LCWIILKATLYSSWFLGVFPY). Residues 33 to 45 (RFDSRNGQLKRSR) are Extracellular-facing. A helical membrane pass occupies residues 46–66 (FLLFYGLILNFFLLLKMVCSG). The Cytoplasmic portion of the chain corresponds to 67-86 (GQKLGIPEAFARNSVLENTH). A helical transmembrane segment spans residues 87-107 (YTTGMLAVFSCVVIHFLNFWG). Residues 108 to 144 (STRVQDLANELLVLEYQQFASLNETKCPKFNSFVIQK) lie on the Extracellular side of the membrane. Asn-130 is a glycosylation site (N-linked (GlcNAc...) asparagine). Residues 145 to 165 (WLSVIGLLLSYLSIAYGLPGN) traverse the membrane as a helical segment. Residues 166-250 (NFSVEMVLIN…YMVATYEYHM (85 aa)) are Cytoplasmic-facing. The helical transmembrane segment at 251 to 271 (TLVLTTGLASNFLAIYSWIVL) threads the bilayer. The Extracellular segment spans residues 272 to 279 (DISMNINF). Residues 280-300 (IYLLIFPLFLLVNVWNLWLSI) traverse the membrane as a helical segment. Residues 301–360 (AASDLAENAGKSTQTVLKLFADLEVKDIELERSVNEFALLCGHCQFNFHVCGLFTINYKM) are Cytoplasmic-facing. A helical membrane pass occupies residues 361–381 (GFQMIITSFLYLIYMIQFDFM). At 382-383 (NL) the chain is on the extracellular side.

The protein belongs to the insect chemoreceptor superfamily. Gustatory receptor (GR) family. Gr22e subfamily. Taste bristles in the foreleg and labial palps.

It is found in the cell membrane. In terms of biological role, probable gustatory receptor which mediates acceptance or avoidance behavior, depending on its substrates. This Drosophila melanogaster (Fruit fly) protein is Putative gustatory receptor 22c (Gr22c).